Here is a 67-residue protein sequence, read N- to C-terminus: Large ribosomal subunit protein eL24 (67 aa).

4 residues coordinate Zn(2+): Cys7, Cys10, Cys33, and Cys37. Residues 7–37 form a C4-type zinc finger; that stretch reads CSYCGKEFEPGTGKMYVRNDGRVYFFCSRKC.

It belongs to the eukaryotic ribosomal protein eL24 family. Part of the 50S ribosomal subunit. Forms a cluster with proteins L3 and L14. It depends on Zn(2+) as a cofactor.

Binds to the 23S rRNA. This Thermococcus sibiricus (strain DSM 12597 / MM 739) protein is Large ribosomal subunit protein eL24.